We begin with the raw amino-acid sequence, 232 residues long: Large ribosomal subunit protein uL1 (232 aa).

The protein belongs to the universal ribosomal protein uL1 family. Part of the 50S ribosomal subunit.

Functionally, binds directly to 23S rRNA. The L1 stalk is quite mobile in the ribosome, and is involved in E site tRNA release. Protein L1 is also a translational repressor protein, it controls the translation of the L11 operon by binding to its mRNA. The sequence is that of Large ribosomal subunit protein uL1 from Aliarcobacter butzleri (strain RM4018) (Arcobacter butzleri).